We begin with the raw amino-acid sequence, 159 residues long: Putative 4-hydroxy-4-methyl-2-oxoglutarate aldolase (159 aa).

Substrate-binding positions include 74–77 and Arg96; that span reads GDNL. An a divalent metal cation-binding site is contributed by Asp97.

Belongs to the class II aldolase/RraA-like family. As to quaternary structure, homotrimer. It depends on a divalent metal cation as a cofactor.

The enzyme catalyses 4-hydroxy-4-methyl-2-oxoglutarate = 2 pyruvate. It catalyses the reaction oxaloacetate + H(+) = pyruvate + CO2. Functionally, catalyzes the aldol cleavage of 4-hydroxy-4-methyl-2-oxoglutarate (HMG) into 2 molecules of pyruvate. Also contains a secondary oxaloacetate (OAA) decarboxylase activity due to the common pyruvate enolate transition state formed following C-C bond cleavage in the retro-aldol and decarboxylation reactions. This chain is Putative 4-hydroxy-4-methyl-2-oxoglutarate aldolase, found in Bacillus cereus (strain ZK / E33L).